Reading from the N-terminus, the 480-residue chain is Coronin-2B (480 aa).

WD repeat units follow at residues 85 to 125 (GHQG…LKRN), 135 to 177 (GHSR…KMID), 179 to 217 (HRDV…VLQE), 220 to 263 (CKTH…MPVT), and 265 to 308 (EEID…PYLT). Residues 436 to 475 (NELLRMFFRQQEEIRRLKEQLSQRDLLVRQLELELKNLRN) adopt a coiled-coil conformation.

This sequence belongs to the WD repeat coronin family.

It is found in the cytoplasm. The protein resides in the cytoskeleton. Its function is as follows. May play a role in the reorganization of neuronal actin structure. The chain is Coronin-2B (coro2b) from Xenopus tropicalis (Western clawed frog).